The following is a 297-amino-acid chain: Protoheme IX farnesyltransferase 1 (297 aa).

The next 9 membrane-spanning stretches (helical) occupy residues 23 to 43 (VVVL…RAGV), 45 to 65 (WSVL…AAVV), 93 to 113 (LPAL…LLVF), 117 to 137 (LTAW…TGFL), 145 to 165 (IVIG…AVSG), 171 to 191 (PLLL…ALAI), 216 to 236 (LHIL…YAIH), 241 to 261 (LYLV…WVLY), and 277 to 297 (IGYL…LLNL).

The protein belongs to the UbiA prenyltransferase family. Protoheme IX farnesyltransferase subfamily.

It localises to the cell inner membrane. It carries out the reaction heme b + (2E,6E)-farnesyl diphosphate + H2O = Fe(II)-heme o + diphosphate. It functions in the pathway porphyrin-containing compound metabolism; heme O biosynthesis; heme O from protoheme: step 1/1. Converts heme B (protoheme IX) to heme O by substitution of the vinyl group on carbon 2 of heme B porphyrin ring with a hydroxyethyl farnesyl side group. The protein is Protoheme IX farnesyltransferase 1 of Pseudomonas putida (strain ATCC 47054 / DSM 6125 / CFBP 8728 / NCIMB 11950 / KT2440).